Reading from the N-terminus, the 234-residue chain is Thymidylate kinase (234 aa).

11-18 (GLEGSGKT) lines the ATP pocket.

It belongs to the thymidylate kinase family.

It carries out the reaction dTMP + ATP = dTDP + ADP. Functionally, phosphorylation of dTMP to form dTDP in both de novo and salvage pathways of dTTP synthesis. The protein is Thymidylate kinase of Wigglesworthia glossinidia brevipalpis.